Consider the following 468-residue polypeptide: MTKTLPKDFIFGGATAAYQAEGATHTDGKGPVAWDKYLEDNYWYTAEPASDFYNRYPVDLKLSEEFGVNGIRISIAWSRIFPTGKGEVNPKGVEYYHNLFAECHKRHVEPFVTLHHFDTPEALHSDGDFLNRENIEHFVNYAEFCFKEFSEVNYWTTFNEIGPIGDGQYLVGKFPPGIQYDLAKVFQSHHNMMVSHARAVKLFKDSGYSGEIGVVHALPTKYPFDANNPDDVRAAELEDIIHNKFILDATYLGKYSDKTMEGVNHILEVNGGELDLREEDFAALDAAKDLNDFLGINYYMSDWMQAFDGETEIIHNGKGEKGSSKYQIKGVGRRKAPVDVPKTDWDWIIFPQGLYDQIMRVKADYPNYKKIYITENGLGYKDEFVDNTVYDGGRIDYVKKHLEVISDAISDGANVKGYFMWSLMDVFSWSNGYEKRYGLFYVDFETQERYPKKSAYWYKKVAETQVIE.

D-galactose 6-phosphate is bound by residues Gln-19, His-116, Asn-159, Glu-160, and Asn-297. Glu-160 serves as the catalytic Proton donor. Catalysis depends on Glu-375, which acts as the Nucleophile. Residues Ser-428, Trp-429, Lys-435, and Tyr-437 each contribute to the D-galactose 6-phosphate site.

Belongs to the glycosyl hydrolase 1 family.

It catalyses the reaction a 6-phospho-beta-D-galactoside + H2O = D-galactose 6-phosphate + an alcohol. The protein operates within carbohydrate metabolism; lactose degradation; D-galactose 6-phosphate and beta-D-glucose from lactose 6-phosphate: step 1/1. In Streptococcus pyogenes serotype M1, this protein is 6-phospho-beta-galactosidase.